Here is a 985-residue protein sequence, read N- to C-terminus: Exocyst complex component 4 (985 aa).

Positions 36–70 (SETTEERQKEKQKIEAEFKRSDLRLNELVSRHDQQ) form a coiled coil. Phosphoserine occurs at positions 235, 456, 459, 682, and 686. The segment at 434–480 (DKSSHVGTSNNSDAFKEHRRNASDASVDDNLAGQLGGSGKGSTSGLF) is disordered.

The protein belongs to the SEC8 family. As to quaternary structure, the exocyst complex is composed of Sec3/Exoc1, Sec5/Exoc2, Sec6/Exoc3, Sec8/Exoc4, Sec10/Exoc5, Sec15/Exoc6, exo70/Exoc7 and Exo84/Exoc8. Abundant in the embryonic and larval glutamatergic neuromuscular junctions (NMJs), pre and postsynaptically.

Functionally, component of the exocyst complex involved in the docking of exocytic vesicles with fusion sites on the plasma membrane. Involved in regulation of synaptic microtubule formation, and also regulation of synaptic growth and glutamate receptor trafficking. Does not appear to be required for basal neurotransmission. The chain is Exocyst complex component 4 from Drosophila melanogaster (Fruit fly).